A 286-amino-acid polypeptide reads, in one-letter code: MIGKPRGRRGVNLQILPSAMTVLSICAGLTAIKFALEHQPKAAMALIAAAAILDGLDGRVARILDAQSRMGAEIDSLADAVNFGVTPALVLYVSMLSKWPVGWVVVLLYAVCVVLRLARYNALQDDGTQPAYAHEFFVGMPAPAGAVSMIGLLALKMQFGEGWWTSGWFLSFWVTGTSILLVSGIPMKKMHAVSVPPNYAAALLAVLAICAAAAVLAPYLLIWVIIIAYMCHIPFAVRSQRWLAQHPEVWDDKPKQRRAVRRASRRAHPYRPSMARLGLRKPGRRL.

The next 6 membrane-spanning stretches (helical) occupy residues 15–35 (ILPSAMTVLSICAGLTAIKFA), 74–94 (IDSLADAVNFGVTPALVLYVS), 95–115 (MLSKWPVGWVVVLLYAVCVVL), 135–155 (EFFVGMPAPAGAVSMIGLLAL), 167–187 (GWFLSFWVTGTSILLVSGIPM), and 207–227 (LAICAAAAVLAPYLLIWVIII).

This sequence belongs to the CDP-alcohol phosphatidyltransferase class-I family.

The protein resides in the cell membrane. It catalyses the reaction a CDP-1,2-diacyl-sn-glycerol + L-serine = a 1,2-diacyl-sn-glycero-3-phospho-L-serine + CMP + H(+). The sequence is that of CDP-diacylglycerol--serine O-phosphatidyltransferase (pssA) from Mycobacterium tuberculosis (strain ATCC 25618 / H37Rv).